A 279-amino-acid polypeptide reads, in one-letter code: Elongation factor Ts (279 aa).

Residues 79-82 are involved in Mg(2+) ion dislocation from EF-Tu; that stretch reads TDFV.

This sequence belongs to the EF-Ts family.

It is found in the cytoplasm. Associates with the EF-Tu.GDP complex and induces the exchange of GDP to GTP. It remains bound to the aminoacyl-tRNA.EF-Tu.GTP complex up to the GTP hydrolysis stage on the ribosome. The sequence is that of Elongation factor Ts from Phytoplasma mali (strain AT).